A 201-amino-acid polypeptide reads, in one-letter code: Recombination protein RecR (201 aa).

The C4-type zinc finger occupies Cys-57–Cys-72. One can recognise a Toprim domain in the interval Gly-81 to Pro-176.

Belongs to the RecR family.

Functionally, may play a role in DNA repair. It seems to be involved in an RecBC-independent recombinational process of DNA repair. It may act with RecF and RecO. This Photorhabdus laumondii subsp. laumondii (strain DSM 15139 / CIP 105565 / TT01) (Photorhabdus luminescens subsp. laumondii) protein is Recombination protein RecR.